The primary structure comprises 500 residues: Na(+)/H(+) antiporter NhaB (500 aa).

The next 13 helical transmembrane spans lie at 11–31 (HGFLGQSPLWYKAIICLFLVL), 34–54 (LLLVTVGPVAAGWALVLEFIF), 58–78 (MALKCYPLMPGGLLLVEALLL), 96–116 (VILLLMFMVAGIHFMKELLLF), 129–149 (AILSLLFCVLSAFLSAFLDAL), 150–170 (TVTAVIISAAVGFYAVYHRVA), 205–225 (LLMHGAVGTALGGVCTLVGEP), 241–261 (FFFKVAPVSLPVLGAGLLTCV), 311–331 (ILIICLGLHVAEVGLIGLMVI), 350–370 (FQDAMPFTSLLVVFFAVVAVI), 394–414 (MLYLANGLLSAISDNVFVATI), 450–470 (ATPNGQAAFLFLLTSAIAPLI), and 477–497 (MVWMALPYTVVMGGLGWWAVT).

The protein belongs to the NhaB Na(+)/H(+) (TC 2.A.34) antiporter family.

It localises to the cell inner membrane. It carries out the reaction 2 Na(+)(in) + 3 H(+)(out) = 2 Na(+)(out) + 3 H(+)(in). Its function is as follows. Na(+)/H(+) antiporter that extrudes sodium in exchange for external protons. In Pseudomonas putida (strain GB-1), this protein is Na(+)/H(+) antiporter NhaB.